A 225-amino-acid polypeptide reads, in one-letter code: Uracil-DNA glycosylase (225 aa).

The active-site Proton acceptor is aspartate 64.

The protein belongs to the uracil-DNA glycosylase (UDG) superfamily. UNG family.

The protein resides in the cytoplasm. It carries out the reaction Hydrolyzes single-stranded DNA or mismatched double-stranded DNA and polynucleotides, releasing free uracil.. Functionally, excises uracil residues from the DNA which can arise as a result of misincorporation of dUMP residues by DNA polymerase or due to deamination of cytosine. This chain is Uracil-DNA glycosylase, found in Agathobacter rectalis (strain ATCC 33656 / DSM 3377 / JCM 17463 / KCTC 5835 / VPI 0990) (Eubacterium rectale).